The primary structure comprises 358 residues: 3-O-methylredipecamine 2-O-methyltransferase IpeOMT3 (358 aa).

Gly-193, Asp-216, Asp-236, Met-237, and Lys-250 together coordinate S-adenosyl-L-methionine. The Proton acceptor role is filled by His-254.

The protein belongs to the class I-like SAM-binding methyltransferase superfamily. Cation-independent O-methyltransferase family. In terms of tissue distribution, expressed in roots.

It localises to the cytoplasm. The protein localises to the cytosol. The catalysed reaction is (S)-reticuline + S-adenosyl-L-methionine = (S)-laudanine + S-adenosyl-L-homocysteine + H(+). Its pathway is alkaloid biosynthesis. Its function is as follows. O-methyltransferase involved in the biosynthesis of ipecac and benzylisoquinoline monoterpenoid-isoquinoline alkaloids natural products, starting by the condensation of dopamine and secologanin, and including emetine and cephaeline, drugs used both as anti-protozoal (e.g. treatment of ameobiasis) and as emetic agents. Catalyzes 2-O-methylation of 3-O-methylredipecamine and, with less efficiency, the 7-O-methylation of (S)-coclaurine, (R,S)-N-methylcoclaurine, (R,S)-4'-O-methylcoclaurine, (R,S)-6-O-methyllaudanosoline, nororientaline, (S)-norreticuline and (S)-reticuline. The polypeptide is 3-O-methylredipecamine 2-O-methyltransferase IpeOMT3 (Carapichea ipecacuanha (Ipecac)).